Here is a 345-residue protein sequence, read N- to C-terminus: Endochitinase 4 (345 aa).

A signal peptide spans 1 to 27; the sequence is MAPLLNTGLVILPLIVSTLLGPMPAFA. N-linked (GlcNAc...) asparagine glycosylation is found at Asn29 and Asn89. In terms of domain architecture, GH18 spans 41-345; the sequence is KVLQGYWENW…TFGDNVKGRL (305 aa). Catalysis depends on Glu163, which acts as the Proton donor. Asn316 carries N-linked (GlcNAc...) asparagine glycosylation.

The protein belongs to the glycosyl hydrolase 18 family. Chitinase class V subfamily.

Its subcellular location is the secreted. It carries out the reaction Random endo-hydrolysis of N-acetyl-beta-D-glucosaminide (1-&gt;4)-beta-linkages in chitin and chitodextrins.. Functionally, secreted chitinase involved in the degradation of chitin, a component of the cell walls of fungi and exoskeletal elements of some animals (including worms and arthropods). Participates in the infection process and directly acts in the penetration process of the host cuticle. The polypeptide is Endochitinase 4 (chi4) (Metarhizium robertsii (strain ARSEF 23 / ATCC MYA-3075) (Metarhizium anisopliae (strain ARSEF 23))).